The following is a 426-amino-acid chain: Tyrosine--tRNA ligase (426 aa).

Y38 contacts L-tyrosine. The short motif at P43–S52 is the 'HIGH' region element. Positions 176 and 180 each coordinate L-tyrosine. The 'KMSKS' region signature appears at K236–T240. K239 contacts ATP. The region spanning Q359–K426 is the S4 RNA-binding domain.

Belongs to the class-I aminoacyl-tRNA synthetase family. TyrS type 1 subfamily. As to quaternary structure, homodimer.

It is found in the cytoplasm. It catalyses the reaction tRNA(Tyr) + L-tyrosine + ATP = L-tyrosyl-tRNA(Tyr) + AMP + diphosphate + H(+). Functionally, catalyzes the attachment of tyrosine to tRNA(Tyr) in a two-step reaction: tyrosine is first activated by ATP to form Tyr-AMP and then transferred to the acceptor end of tRNA(Tyr). The protein is Tyrosine--tRNA ligase of Aliivibrio salmonicida (strain LFI1238) (Vibrio salmonicida (strain LFI1238)).